Reading from the N-terminus, the 219-residue chain is Swarming motility regulation protein RssB (219 aa).

A Response regulatory domain is found at 2–116 (NILLVEDDLQ…ELISRVKAVN (115 aa)). Aspartate 51 carries the post-translational modification 4-aspartylphosphate. Positions 124–218 (SQTWSLGALY…VRGIGYLLKK (95 aa)) form a DNA-binding region, ompR/PhoB-type.

It is found in the cytoplasm. Member of the two-component regulatory system RssA/RssB involved in regulation of swarming motility which has been shown to be inhibited by saturated fatty acids. RssA/RssB regulates cellular fatty acid composition, hemolysin production and cell surface topography. RssA/RssB negatively regulates the activity of SlhBA. It can also act as a negative regulator for the control of the swarming initiation. RssB binds its own promoter. The protein is Swarming motility regulation protein RssB (rssB) of Serratia marcescens.